The sequence spans 1940 residues: Protein ORF1940 (1940 aa).

4 TPR repeats span residues 119–153, 155–186, 480–513, and 617–652; these read IKAC…ALQY, FQSL…LQQI, RLPD…GLHG, and GKSM…SPTS. Disordered regions lie at residues 1160 to 1239 and 1519 to 1571; these read PSKV…PGAV and KGPS…TVTS. Residues 1164 to 1185 are compositionally biased toward low complexity; that stretch reads QNTTQPSATQNTTTQPTAQNTS. The segment covering 1186-1200 has biased composition (polar residues); it reads LPGATQNTTLPTPSK. Composition is skewed to low complexity over residues 1201–1235, 1521–1539, and 1561–1571; these read VQNT…NTSL, PSTT…MTPP, and TPGSGSQTVTS. The stretch at 1691 to 1724 is one TPR 5 repeat; it reads KDLNKSVGTSVVEEAKYNSTLQTYLAGLGIKDLN. The tract at residues 1862-1940 is disordered; that stretch reads TTTHHITPPP…AEQAEQVLLI (79 aa). Residues 1868–1883 show a composition bias toward pro residues; sequence TPPPPPPPPPPPPPPK. A compositionally biased stretch (low complexity) spans 1884–1894; sequence TQTITTTTQIT. The span at 1895-1912 shows a compositional bias: pro residues; it reads PPSPPPTPPPPPPPPKSP.

The polypeptide is Protein ORF1940 (Acidianus convivator (ATV)).